The sequence spans 364 residues: CLIP domain-containing serine protease B15 (364 aa).

The signal sequence occupies residues Met-1–Ala-19. One can recognise a Clip domain in the interval Pro-30–Cys-89. 3 disulfides stabilise this stretch: Cys-31/Cys-88, Cys-41/Cys-72, and Cys-47/Cys-89. Asn-46 is a glycosylation site (N-linked (GlcNAc...) asparagine). In terms of domain architecture, Peptidase S1 spans Ile-107–Phe-359. The N-linked (GlcNAc...) asparagine glycan is linked to Asn-131. A disulfide bridge links Cys-137 with Cys-153. The active-site Charge relay system is His-152. Residues Asn-171, Asn-177, and Asn-206 are each glycosylated (N-linked (GlcNAc...) asparagine). Asp-212 (charge relay system) is an active-site residue. A disulfide bridge links Cys-279 with Cys-296. Residues Asn-287 and Asn-301 are each glycosylated (N-linked (GlcNAc...) asparagine). Cysteines 306 and 335 form a disulfide. Ser-310 acts as the Charge relay system in catalysis.

It belongs to the peptidase S1 family. CLIP subfamily. Post-translationally, N-glycosylated. In terms of processing, proteolytically cleaved. Expressed by a subpopulation of hemocytes.

The protein localises to the secreted. Serine protease. Plays a role in innate immunity against infections by parasite P.berghei and by Gram-negative bacteria such as E.coli. In response to P.berghei infection, contributes to the clearing of parasite ookinetes independent of melanization, an innate immune response which consists in the deposition of melanin pigments on invading pathogens and parasites. The polypeptide is CLIP domain-containing serine protease B15 (Anopheles gambiae (African malaria mosquito)).